Consider the following 291-residue polypeptide: tRNA pseudouridine synthase-like 1 (291 aa).

The active-site Nucleophile is the Asp-66. Tyr-130 contacts substrate.

It belongs to the tRNA pseudouridine synthase TruA family.

It catalyses the reaction a uridine in tRNA = a pseudouridine in tRNA. This is tRNA pseudouridine synthase-like 1 (Pusl1) from Mus musculus (Mouse).